Consider the following 442-residue polypeptide: Galactose/N-acetylgalactosamine-binding lectin CEL-III (442 aa).

Positions 1 to 10 (MVSLVPCGFA) are cleaved as a propeptide — removed in mature form. Pyrrolidone carboxylic acid is present on Gln-11. Residues 11–304 (QVLCTNPLDI…DWEVPTATWN (294 aa)) form a has hemagglutinating activity towards rabbit erythrocytes, but no hemolytic activity towards them region. 3 cysteine pairs are disulfide-bonded: Cys-14-Cys-59, Cys-31-Cys-48, and Cys-72-Cys-88. D-galactose is bound by residues Asp-19 and 33-36 (DIVG). Ricin B-type lectin domains follow at residues 28–102 (SKQC…RWRL) and 115–245 (EQVA…WSRP). Residues Asp-33, Ile-34, and Gly-36 each coordinate Ca(2+). Residues Asn-42 and Ile-43 each coordinate Mg(2+). Residue Asp-49 coordinates D-galactose. Asp-53 is a binding site for Ca(2+). The Mg(2+) site is built by Asn-82 and Val-83. Residues Val-117 and 131–134 (DVEG) each bind D-galactose. Residues Cys-129 and Cys-146 are joined by a disulfide bond. Asp-131, Val-132, and Gly-134 together coordinate Ca(2+). Residue Ile-141 participates in Mg(2+) binding. 144–147 (YDCQ) lines the D-galactose pocket. Residues Asp-151, Asp-178, Val-179, and Gly-181 each contribute to the Ca(2+) site. A disulfide bridge connects residues Cys-176 and Cys-193. 178 to 181 (DVEG) is a D-galactose binding site. The Mg(2+) site is built by Asn-187 and Val-188. 191-194 (YSCE) is a D-galactose binding site. Positions 198, 219, 220, and 222 each coordinate Ca(2+). Cys-217 and Cys-234 are disulfide-bonded. 219 to 222 (DVEG) is a D-galactose binding site. Residues Asn-228 and Val-229 each contribute to the Mg(2+) site. 232 to 235 (YRCD) contributes to the D-galactose binding site. Asp-239 is a Ca(2+) binding site. 2 disulfide bridges follow: Cys-249/Cys-254 and Cys-264/Cys-281. The region spanning 261-293 (SNKCLDVSGDQGTGDVGTWQCDGLPDQRFKWVF) is the Ricin B-type lectin 3 domain. Positions 266, 267, and 269 each coordinate Ca(2+). 266-269 (DVSG) is a binding site for D-galactose. Positions 275 and 276 each coordinate Mg(2+). D-galactose contacts are provided by residues 279–282 (WQCD) and Asp-286. A Ca(2+)-binding site is contributed by Asp-286. The tract at residues 294 to 442 (DDWEVPTATW…NEDCTFCTDI (149 aa)) is has a strong tendency to self-associate leading to formation of oligomers. Intrachain disulfides connect Cys-308–Cys-390, Cys-377–Cys-416, Cys-425–Cys-439, and Cys-431–Cys-436.

In terms of assembly, oligomerizes in the human and rabbit erythrocyte membranes. Oligomerization is induced by binding of beta-1,4-linked disaccharide ligands such as lactose, lactulose, N-acetyllactosamine and phenyl-beta-D-galactoside, but only a little by N-acetylgalactosamine and galactose, and not at all by melibiose in aqueous solution in the presence of high salt concentration and pH 10. Forms heptamers that assemble into larger 21mer oligomers, which may be inserted as a transmembrane pore to the erythrocyte membrane. Ca(2+) is required as a cofactor. It depends on Mg(2+) as a cofactor. Expressed in body fluid (at protein level).

It is found in the secreted. With respect to regulation, ca(2+) is required for hemolytic activity and the activity increases with increasing calcium concentration. Hemolytic activity is inhibited by N-acetylgalactosamine (GalNAc), lactose, lactulose, galactosamine, dextran with molecular masses greater than 4 kDa, to a lesser extent by inulin and only slightly by sucrose and melezitose, but not by glucose or mannose. The activity is abolished in the presence of 10 mM EDTA. Lactose-binding increases with increasing calcium concentration, but calcium has no effect on hemagglutinating activity. Cytotoxic effect on Madin-Darby canine kidney (MDCK) cell line is strongly inhibited by galactose, lactose and N-acetylgalactosamine (GalNAc), but not by raffinose, N-acetylglucosamine (GlcNAc), glucose, mannose, ribose or sucrose. Pore formation in artificial lactosyl ceramide (LacCer) or globotetraosylceramide (Gb4Cer) containing liposomes is strongly inhibited by lactose. Functionally, galactose/N-acetylgalactosamine (Gal/GalNAc)-binding lectin with hemolytic activity. Favors saccharides that have a beta-1,4 linkage at the non-reducing end rather than saccharides having alpha-1,6 or alpha-1,4 linkages. Binds lactose, lactulose, GalNAc, galactosamine, methyl alpha-galactopyranoside, methyl beta-galactopyranoside, N-acetyllactosamine, p-nitrophenyl beta-D-galactopyranoside (pNP-Gal), p-nitrophenyl N-acetyl-beta-D-galactosaminide (pNP-GalNAc), asialofetuin, and human erythrocyte membrane lipids lactosyl ceramide (LacCer) and globoside globotetraosylceramide (Gb4Cer). Binds moderately to galactose, melibiose, raffinose, fucose, methyl alpha-galactoside and methyl beta-galactoside. Binds weakly to glucose, mannose and N-acetylglucosamine (GlcNAc). Has hemolytic activity towards human (A, B and O-type), rabbit and rat erythrocytes, but not towards mouse, chicken or horse erythrocytes. Forms ion-permeable transmembrane pores in the erythrocyte membrane as well as in artificial liposomes containing human erythrocyte membrane lipids LacCer, Gb4Cer and galactosyl ceramide (GalCer) leading to destruction of the membrane. Has hemagglutinating activity towards rabbit, human and rat erythrocytes, and at relatively high concentrations towards chicken and horse erythrocytes, but not towards mouse erythrocytes. Has dose-dependent cytotoxic effect on Madin-Darby canine kidney (MDCK), African green monkey kidney (Vero) and human epithelia carcinoma (HeLa) cell lines, but Chinese hamster ovary (CHO), rat sarcoma (XC) and potoroo rat kangaroo kidney (PtK1) cells are highly resistant to the cytotoxic effect of this protein. Impairs malaria parasite development in malaria parasite infected transgenic A.stephensi mosquitoes expressing this protein specifically in their midguts. Binds to ookinetes and leads to strong dose-dependent inhibition of ookinete formation in vitro. Leads to severely impaired oocyst formation and significantly reduced sporozoite production of rodent malaria parasite P.berghei in the salivary glands of the transgenic mosquitoes. The parasite transmission to uninfected mice (vectorial competence) of these mosquitoes is significantly impaired. Also leads to severely impaired oocyst formation of human malaria parasite P.falciparum in transgenic mosquitoes fed on mature P.falciparum gametocyte cultures. May be involved in defense mechanisms acting as a toxic protein to foreign microorganisms. May act in defense against predators. This chain is Galactose/N-acetylgalactosamine-binding lectin CEL-III, found in Pseudocnus echinatus (Sea cucumber).